The chain runs to 194 residues: Oligoribonuclease (194 aa).

The 164-residue stretch at 11-174 (LIWIDLEMTG…SDVRDSIDEL (164 aa)) folds into the Exonuclease domain. The active site involves Tyr132.

The protein belongs to the oligoribonuclease family.

Its subcellular location is the cytoplasm. Functionally, 3'-to-5' exoribonuclease specific for small oligoribonucleotides. This chain is Oligoribonuclease, found in Xanthomonas euvesicatoria pv. vesicatoria (strain 85-10) (Xanthomonas campestris pv. vesicatoria).